A 664-amino-acid chain; its full sequence is UV-stimulated scaffold protein A homolog (664 aa).

The tract at residues 10–153 is VHS-like; that stretch reads KVIGLIEKAT…LKNTLKLKFP (144 aa). Positions 148–180 form a coiled coil; the sequence is LKLKFPDLQANAARIQRERQEREMKTKEILRNK. Disordered regions lie at residues 330-350 and 362-403; these read HGNEETNEEEEDIWEEDDGKV and MRTQ…GNSL. The segment covering 334-347 has biased composition (acidic residues); the sequence is ETNEEEEDIWEEDD. Residues 363–374 show a composition bias toward polar residues; sequence RTQQSENSSLPS. Positions 377–387 are enriched in basic and acidic residues; that stretch reads EAKKSTSEARS. The span at 388–402 shows a compositional bias: polar residues; the sequence is NKVSNTKKVGSSGNS. The UVSSA-type zinc-finger motif lies at 473–500; sequence TPPCRASLKKGGLCQRRDLRVCPFHGPI. Zn(2+) contacts are provided by C476, C486, C494, and H497. 2 disordered regions span residues 514-546 and 640-664; these read SPLDESENQTSSTSGTNQDVSMDETTSDSDPNQ and VKGTNPQQLAQGNDEKCRDTSANQW. Composition is skewed to polar residues over residues 521-533 and 640-650; these read NQTSSTSGTNQDV and VKGTNPQQLAQ.

It belongs to the UVSSA family.

Its subcellular location is the chromosome. The sequence is that of UV-stimulated scaffold protein A homolog from Arabidopsis thaliana (Mouse-ear cress).